Consider the following 117-residue polypeptide: UPF0251 protein cbdbA217 (117 aa).

This sequence belongs to the UPF0251 family.

The polypeptide is UPF0251 protein cbdbA217 (Dehalococcoides mccartyi (strain CBDB1)).